The sequence spans 207 residues: MLNKLSRLLDEAGISLTDHQKNQLVAYVGLLDKWNKAYNLTSVRDPNEMLVRHILDSIIVAPYLQGSRFIDVGTGPGLPGIPLAIVCPESHFTLLDSLGKRVRFLRQVQHELKLDNVTPVQSRVEAFPAEPPFDGVISRAFASLNDMVSWCHHLPAANGHFYALKGLAQKEEMESLPEGYDIVEVIELHVPRLEGERHLVVIKPKSS.

Residues Gly73, Leu78, 124–125, and Arg139 contribute to the S-adenosyl-L-methionine site; that span reads VE.

Belongs to the methyltransferase superfamily. RNA methyltransferase RsmG family.

The protein localises to the cytoplasm. The catalysed reaction is guanosine(527) in 16S rRNA + S-adenosyl-L-methionine = N(7)-methylguanosine(527) in 16S rRNA + S-adenosyl-L-homocysteine. Specifically methylates the N7 position of guanine in position 527 of 16S rRNA. This Klebsiella pneumoniae subsp. pneumoniae (strain ATCC 700721 / MGH 78578) protein is Ribosomal RNA small subunit methyltransferase G.